The sequence spans 544 residues: uncharacterized protein (544 aa).

Residues 1–34 form the signal peptide; the sequence is MIARRMLCARPWGPSCVVCALCGALAALVPAVGA. Residues 38-69 form a disordered region; sequence AVPAPGTPAPPAHTASEAVPPAPEPRAEGEQP.

This sequence belongs to the TP096X family.

This is an uncharacterized protein from Treponema pallidum (strain Nichols).